Reading from the N-terminus, the 352-residue chain is UDP-3-O-acylglucosamine N-acyltransferase (352 aa).

The Proton acceptor role is filled by His-257.

Belongs to the transferase hexapeptide repeat family. LpxD subfamily. Homotrimer.

The catalysed reaction is a UDP-3-O-[(3R)-3-hydroxyacyl]-alpha-D-glucosamine + a (3R)-hydroxyacyl-[ACP] = a UDP-2-N,3-O-bis[(3R)-3-hydroxyacyl]-alpha-D-glucosamine + holo-[ACP] + H(+). It functions in the pathway bacterial outer membrane biogenesis; LPS lipid A biosynthesis. Its function is as follows. Catalyzes the N-acylation of UDP-3-O-acylglucosamine using 3-hydroxyacyl-ACP as the acyl donor. Is involved in the biosynthesis of lipid A, a phosphorylated glycolipid that anchors the lipopolysaccharide to the outer membrane of the cell. In Methylobacterium sp. (strain 4-46), this protein is UDP-3-O-acylglucosamine N-acyltransferase.